The sequence spans 315 residues: Ankyrin repeat domain-containing protein 54 (315 aa).

The interval 1-49 (MDGSSPLLAAAGSDGDRSSSEGEYTLAGGPSAGDTEKREGESPMEAAGA) is disordered. ANK repeat units follow at residues 124 to 153 (HAVK…DPCA), 157 to 186 (KGRT…DPNQ), 190 to 219 (LGNT…RVDA), and 223 to 255 (AGRT…EVTQ).

Its subcellular location is the nucleus. The protein localises to the cytoplasm. It is found in the midbody. Plays an important role in regulating intracellular signaling events associated with erythroid terminal differentiation. This chain is Ankyrin repeat domain-containing protein 54 (ankrd54), found in Danio rerio (Zebrafish).